We begin with the raw amino-acid sequence, 400 residues long: Diphosphomevalonate decarboxylase (400 aa).

(R)-5-diphosphomevalonate contacts are provided by residues 19–22, Arg-75, 154–159, and Thr-210; these read YWGK and SGSACR. The interval 381 to 400 is disordered; sequence DGPRTLGPEEALLSPDGLPK.

It belongs to the diphosphomevalonate decarboxylase family.

The catalysed reaction is (R)-5-diphosphomevalonate + ATP = isopentenyl diphosphate + ADP + phosphate + CO2. Its pathway is isoprenoid biosynthesis; isopentenyl diphosphate biosynthesis via mevalonate pathway; isopentenyl diphosphate from (R)-mevalonate: step 3/3. In terms of biological role, diphosphomevalonate decarboxylase; part of the second module of ergosterol biosynthesis pathway that includes the middle steps of the pathway. The second module involves the formation of farnesyl diphosphate, which is also an important intermediate in the biosynthesis of ubiquinone, dolichol, heme and prenylated proteins. This module also plays a key role in the biosynthesis of triterpenes such as ganoderic acids (GA), a group of highly oxygenated lanostane-type triterpenoids which are well recognized as a main group of unique bioactive compounds in the medicinal mushroom Ganoderma lucidum. Activity by the mevalonate kinase first converts mevalonate into 5-phosphomevalonate. 5-phosphomevalonate is then further converted to 5-diphosphomevalonate by the phosphomevalonate kinase. The diphosphomevalonate decarboxylase MVD then produces isopentenyl diphosphate. The isopentenyl-diphosphate delta-isomerase then catalyzes the 1,3-allylic rearrangement of the homoallylic substrate isopentenyl (IPP) to its highly electrophilic allylic isomer, dimethylallyl diphosphate (DMAPP). Finally the farnesyl diphosphate synthase FPS catalyzes the sequential condensation of isopentenyl pyrophosphate with dimethylallyl pyrophosphate, and then with the resultant geranylpyrophosphate to the ultimate product farnesyl pyrophosphate. In Ganoderma lucidum (Ling zhi medicinal fungus), this protein is Diphosphomevalonate decarboxylase.